The sequence spans 345 residues: Magnesium-chelatase 38 kDa subunit (345 aa).

35-42 lines the ATP pocket; the sequence is GDRGTGKS.

Belongs to the Mg-chelatase subunits D/I family.

It carries out the reaction protoporphyrin IX + Mg(2+) + ATP + H2O = Mg-protoporphyrin IX + ADP + phosphate + 3 H(+). Its pathway is porphyrin-containing compound metabolism; bacteriochlorophyll biosynthesis. Functionally, involved in bacteriochlorophyll biosynthesis; introduces a magnesium ion into protoporphyrin IX to yield Mg-protoporphyrin IX. In Acidiphilium rubrum, this protein is Magnesium-chelatase 38 kDa subunit (bchI).